We begin with the raw amino-acid sequence, 43 residues long: Bacteriocin leucocin-C (43 aa).

The cysteines at positions 9 and 14 are disulfide-linked.

The protein resides in the secreted. Inhibits a wide spectrum of lactic acid bacteria. The protein is Bacteriocin leucocin-C of Leuconostoc mesenteroides.